A 460-amino-acid polypeptide reads, in one-letter code: 3-ketoacyl-CoA synthase 7 (460 aa).

A helical transmembrane segment spans residues 21-41; that stretch reads FHQFLVASACVLIAVFGYYFF. One can recognise an FAE domain in the interval 38–328; it reads YYFFKPRCII…YIISFIQRKW (291 aa). Active-site residues include C183, H262, H345, H349, and N382.

It belongs to the thiolase-like superfamily. Chalcone/stilbene synthases family. In terms of tissue distribution, expressed in flowers.

It is found in the membrane. It catalyses the reaction a very-long-chain acyl-CoA + malonyl-CoA + H(+) = a very-long-chain 3-oxoacyl-CoA + CO2 + CoA. It functions in the pathway lipid metabolism; fatty acid biosynthesis. This Arabidopsis thaliana (Mouse-ear cress) protein is 3-ketoacyl-CoA synthase 7.